Reading from the N-terminus, the 107-residue chain is Large ribosomal subunit protein uL24 (107 aa).

It belongs to the universal ribosomal protein uL24 family. In terms of assembly, part of the 50S ribosomal subunit.

Functionally, one of two assembly initiator proteins, it binds directly to the 5'-end of the 23S rRNA, where it nucleates assembly of the 50S subunit. In terms of biological role, one of the proteins that surrounds the polypeptide exit tunnel on the outside of the subunit. The chain is Large ribosomal subunit protein uL24 from Streptomyces avermitilis (strain ATCC 31267 / DSM 46492 / JCM 5070 / NBRC 14893 / NCIMB 12804 / NRRL 8165 / MA-4680).